The chain runs to 469 residues: Histone chaperone rtt-106 (469 aa).

Disordered regions lie at residues 54 to 73 (EEPATKRRRVEAQTSGPNGA) and 364 to 469 (MAEQ…EGEE). Basic and acidic residues-rich tracts occupy residues 364 to 379 (MAEQRKAKKQLAENAK) and 402 to 415 (ELERAQKEEEQRLQ). Acidic residues-rich tracts occupy residues 416–433 (DEEDEEEEDYDPGSEGES) and 440–469 (SEEEEEEEDGEGEGDEDDDEDMGEGLEGEE).

It belongs to the RTT106 family. In terms of assembly, interacts with histones H3 and H4.

It is found in the nucleus. Its subcellular location is the chromosome. Functionally, histones H3 and H4 chaperone involved in the nucleosome formation and heterochromatin silencing. Required for the deposition of H3K56ac-carrying H3-H4 complex onto newly-replicated DNA. Plays a role in the transcriptional regulation of the cell-cycle dependent histone genes by creating a repressive structure at the core histone gene promoter. The chain is Histone chaperone rtt-106 (rtt-106) from Neurospora crassa (strain ATCC 24698 / 74-OR23-1A / CBS 708.71 / DSM 1257 / FGSC 987).